Here is a 239-residue protein sequence, read N- to C-terminus: Purine nucleoside phosphorylase DeoD-type (239 aa).

An a purine D-ribonucleoside-binding site is contributed by H5. Phosphate contacts are provided by residues G21, R25, R44, and 89 to 92 (RVGS). A purine D-ribonucleoside contacts are provided by residues 180 to 182 (EME) and 204 to 205 (SD). D205 (proton donor) is an active-site residue.

This sequence belongs to the PNP/UDP phosphorylase family. In terms of assembly, homohexamer; trimer of homodimers.

The catalysed reaction is a purine D-ribonucleoside + phosphate = a purine nucleobase + alpha-D-ribose 1-phosphate. The enzyme catalyses a purine 2'-deoxy-D-ribonucleoside + phosphate = a purine nucleobase + 2-deoxy-alpha-D-ribose 1-phosphate. Catalyzes the reversible phosphorolytic breakdown of the N-glycosidic bond in the beta-(deoxy)ribonucleoside molecules, with the formation of the corresponding free purine bases and pentose-1-phosphate. The protein is Purine nucleoside phosphorylase DeoD-type of Klebsiella pneumoniae.